The chain runs to 261 residues: Carnitinyl-CoA dehydratase (261 aa).

Residue Glu-111 is the Nucleophile of the active site. The Proton acceptor role is filled by Glu-131.

This sequence belongs to the enoyl-CoA hydratase/isomerase family.

The catalysed reaction is (R)-carnitinyl-CoA = crotonobetainyl-CoA + H2O. It participates in amine and polyamine metabolism; carnitine metabolism. Catalyzes the reversible dehydration of L-carnitinyl-CoA to crotonobetainyl-CoA. In Salmonella typhimurium (strain LT2 / SGSC1412 / ATCC 700720), this protein is Carnitinyl-CoA dehydratase.